A 403-amino-acid chain; its full sequence is NADH-quinone oxidoreductase subunit D (403 aa).

Belongs to the complex I 49 kDa subunit family. NDH-1 is composed of 14 different subunits. Subunits NuoB, C, D, E, F, and G constitute the peripheral sector of the complex.

Its subcellular location is the cell inner membrane. The catalysed reaction is a quinone + NADH + 5 H(+)(in) = a quinol + NAD(+) + 4 H(+)(out). Functionally, NDH-1 shuttles electrons from NADH, via FMN and iron-sulfur (Fe-S) centers, to quinones in the respiratory chain. The immediate electron acceptor for the enzyme in this species is believed to be ubiquinone. Couples the redox reaction to proton translocation (for every two electrons transferred, four hydrogen ions are translocated across the cytoplasmic membrane), and thus conserves the redox energy in a proton gradient. This chain is NADH-quinone oxidoreductase subunit D, found in Pelobacter propionicus (strain DSM 2379 / NBRC 103807 / OttBd1).